We begin with the raw amino-acid sequence, 312 residues long: Plasma membrane-associated coenzyme Q6 reductase PGA3 (312 aa).

Topologically, residues 1-15 (MSKEDIEGTNILDEP) are extracellular. The helical transmembrane segment at 16–36 (VHGIYIPAALFVVGVAITTYM) threads the bilayer. Over 37–39 (SGE) the chain is Cytoplasmic. Residues 40 to 60 (LKILWSLPILFMIIFVRAYSA) traverse the membrane as a helical segment. Residues 61–179 (YKRRRSLYPD…LNYEPNSSKH (119 aa)) are Extracellular-facing. Residues 70 to 173 (DRWTSLELED…KGPIGTLNYE (104 aa)) enclose the FAD-binding FR-type domain. FAD contacts are provided by residues 153-168 (AGLNSGDTVDFKGPIG) and 179-211 (HLGIVAGGSGITPVLQILNEIITVPEDLTKVSL). A helical transmembrane segment spans residues 180-200 (LGIVAGGSGITPVLQILNEII). Over 201–312 (TVPEDLTKVS…SSGDDQVFVF (112 aa)) the chain is Cytoplasmic.

It belongs to the flavoprotein pyridine nucleotide cytochrome reductase family. The cofactor is FAD.

The protein localises to the cell membrane. The protein resides in the endoplasmic reticulum membrane. It carries out the reaction 2 Fe(III)-[cytochrome b5] + NADH = 2 Fe(II)-[cytochrome b5] + NAD(+) + H(+). With respect to regulation, inhibited by diphenylene iodonium (DPI). Functionally, NADH-dependent cytochrome b5 reductase that reduces coenzyme Q6 at the plasma membrane and mediates lifespan extension by calorie restriction by shifting fermentative to respiratory metabolism, probably through modulating the NAD(+)/NADH ratio. The sequence is that of Plasma membrane-associated coenzyme Q6 reductase PGA3 (PGA3) from Saccharomyces cerevisiae (strain ATCC 204508 / S288c) (Baker's yeast).